A 689-amino-acid polypeptide reads, in one-letter code: Glycine--tRNA ligase beta subunit (689 aa).

The protein belongs to the class-II aminoacyl-tRNA synthetase family. In terms of assembly, tetramer of two alpha and two beta subunits.

It localises to the cytoplasm. The enzyme catalyses tRNA(Gly) + glycine + ATP = glycyl-tRNA(Gly) + AMP + diphosphate. This Shewanella amazonensis (strain ATCC BAA-1098 / SB2B) protein is Glycine--tRNA ligase beta subunit.